A 334-amino-acid chain; its full sequence is S-adenosylmethionine:tRNA ribosyltransferase-isomerase (334 aa).

Belongs to the QueA family. As to quaternary structure, monomer.

The protein resides in the cytoplasm. The catalysed reaction is 7-aminomethyl-7-carbaguanosine(34) in tRNA + S-adenosyl-L-methionine = epoxyqueuosine(34) in tRNA + adenine + L-methionine + 2 H(+). It participates in tRNA modification; tRNA-queuosine biosynthesis. Its function is as follows. Transfers and isomerizes the ribose moiety from AdoMet to the 7-aminomethyl group of 7-deazaguanine (preQ1-tRNA) to give epoxyqueuosine (oQ-tRNA). This is S-adenosylmethionine:tRNA ribosyltransferase-isomerase from Rubrobacter xylanophilus (strain DSM 9941 / JCM 11954 / NBRC 16129 / PRD-1).